The sequence spans 475 residues: Ribulose bisphosphate carboxylase large chain (475 aa).

The propeptide occupies 1–2 (MS). An N-acetylproline modification is found at Pro3. Lys14 bears the N6,N6,N6-trimethyllysine mark. Residues Asn123 and Thr173 each contribute to the substrate site. Lys175 functions as the Proton acceptor in the catalytic mechanism. Lys177 lines the substrate pocket. Lys201, Asp203, and Glu204 together coordinate Mg(2+). Residue Lys201 is modified to N6-carboxylysine. Residue His294 is the Proton acceptor of the active site. 3 residues coordinate substrate: Arg295, His327, and Ser379.

It belongs to the RuBisCO large chain family. Type I subfamily. In terms of assembly, heterohexadecamer of 8 large chains and 8 small chains; disulfide-linked. The disulfide link is formed within the large subunit homodimers. Mg(2+) is required as a cofactor. In terms of processing, the disulfide bond which can form in the large chain dimeric partners within the hexadecamer appears to be associated with oxidative stress and protein turnover.

The protein resides in the plastid. The protein localises to the chloroplast. It catalyses the reaction 2 (2R)-3-phosphoglycerate + 2 H(+) = D-ribulose 1,5-bisphosphate + CO2 + H2O. The enzyme catalyses D-ribulose 1,5-bisphosphate + O2 = 2-phosphoglycolate + (2R)-3-phosphoglycerate + 2 H(+). Functionally, ruBisCO catalyzes two reactions: the carboxylation of D-ribulose 1,5-bisphosphate, the primary event in carbon dioxide fixation, as well as the oxidative fragmentation of the pentose substrate in the photorespiration process. Both reactions occur simultaneously and in competition at the same active site. This is Ribulose bisphosphate carboxylase large chain from Nandina domestica (Heavenly bamboo).